The primary structure comprises 588 residues: Sulfite reductase [NADPH] hemoprotein beta-component (588 aa).

Residues C443, C449, C488, and C492 each contribute to the [4Fe-4S] cluster site. Siroheme is bound at residue C492.

The protein belongs to the nitrite and sulfite reductase 4Fe-4S domain family. As to quaternary structure, alpha(8)-beta(8). The alpha component is a flavoprotein, the beta component is a hemoprotein. Siroheme is required as a cofactor. It depends on [4Fe-4S] cluster as a cofactor.

It carries out the reaction hydrogen sulfide + 3 NADP(+) + 3 H2O = sulfite + 3 NADPH + 4 H(+). It functions in the pathway sulfur metabolism; hydrogen sulfide biosynthesis; hydrogen sulfide from sulfite (NADPH route): step 1/1. Component of the sulfite reductase complex that catalyzes the 6-electron reduction of sulfite to sulfide. This is one of several activities required for the biosynthesis of L-cysteine from sulfate. The sequence is that of Sulfite reductase [NADPH] hemoprotein beta-component from Actinobacillus succinogenes (strain ATCC 55618 / DSM 22257 / CCUG 43843 / 130Z).